Here is a 384-residue protein sequence, read N- to C-terminus: Substance-K receptor (384 aa).

The Extracellular portion of the chain corresponds to methionine 1 to glutamine 32. N-linked (GlcNAc...) asparagine glycans are attached at residues asparagine 11, asparagine 18, and asparagine 19. The helical transmembrane segment at leucine 33–tryptophan 56 threads the bilayer. Residues isoleucine 57 to asparagine 69 lie on the Cytoplasmic side of the membrane. The chain crosses the membrane as a helical span at residues tyrosine 70–asparagine 90. Topologically, residues phenylalanine 91–histidine 107 are extracellular. An intrachain disulfide couples cysteine 106 to cysteine 181. The chain crosses the membrane as a helical span at residues phenylalanine 108 to alanine 129. At aspartate 130–arginine 149 the chain is on the cytoplasmic side. The helical transmembrane segment at alanine 150–serine 170 threads the bilayer. Residues threonine 171 to leucine 196 lie on the Extracellular side of the membrane. A helical membrane pass occupies residues tyrosine 197–serine 218. At valine 219–threonine 251 the chain is on the cytoplasmic side. The chain crosses the membrane as a helical span at residues methionine 252–leucine 272. Residues glycine 273–leucine 290 lie on the Extracellular side of the membrane. A helical transmembrane segment spans residues alanine 291 to leucine 310. Residues asparagine 311–proline 384 are Cytoplasmic-facing. A lipid anchor (S-palmitoyl cysteine) is attached at cysteine 324.

It belongs to the G-protein coupled receptor 1 family.

Its subcellular location is the cell membrane. In terms of biological role, this is a receptor for the tachykinin neuropeptide substance K (neurokinin A). It is associated with G proteins that activate a phosphatidylinositol-calcium second messenger system. This chain is Substance-K receptor (TACR2), found in Canis lupus familiaris (Dog).